The sequence spans 583 residues: 5-aminolevulinate synthase, erythroid-specific, mitochondrial (583 aa).

Arg-158 serves as a coordination point for succinyl-CoA. 2 residues coordinate pyridoxal 5'-phosphate: Cys-253 and Phe-254. 2 residues coordinate succinyl-CoA: Ser-275 and Arg-294. Pyridoxal 5'-phosphate is bound by residues Ser-327, His-355, and Thr-383. Lys-386 is a catalytic residue. At Lys-386 the chain carries N6-(pyridoxal phosphate)lysine. Residues Thr-415 and Thr-416 each coordinate pyridoxal 5'-phosphate. Thr-503 provides a ligand contact to succinyl-CoA.

The protein belongs to the class-II pyridoxal-phosphate-dependent aminotransferase family. In terms of assembly, homodimer. Requires pyridoxal 5'-phosphate as cofactor.

Its subcellular location is the mitochondrion inner membrane. It carries out the reaction succinyl-CoA + glycine + H(+) = 5-aminolevulinate + CO2 + CoA. The protein operates within porphyrin-containing compound metabolism; protoporphyrin-IX biosynthesis; 5-aminolevulinate from glycine: step 1/1. Functionally, catalyzes the pyridoxal 5'-phosphate (PLP)-dependent condensation of succinyl-CoA and glycine to form aminolevulinic acid (ALA), with CoA and CO2 as by-products. Contributes significantly to heme formation during erythropoiesis. This Danio rerio (Zebrafish) protein is 5-aminolevulinate synthase, erythroid-specific, mitochondrial (alas2).